A 381-amino-acid polypeptide reads, in one-letter code: MSLNMFWFLPTHGDGHYLGTEEGSRPVDHGYLQQIAQAADRLGYTGVLIPTGRSCEDAWLVAASMIPVTQRLKFLVALRPSVTSPTVAARQAATLDRLSNGRALFNLVTGSDPQELAGDGVFLDHSERYEASAEFTQVWRRLLLGETVNFNGKHSHVRGAKLLFPPIQQPYPPLYFGGSSDVAQELAAEQVDLYLTWGEPPELVKEKIEQVRAKAAAYGRKIRFGIRLHVIVRETNDEAWQAAERLISHLDDETIAKAQAAFARTDSVGQQRMAALHNGKRDNLEISPNLWAGVGLVRGGAGTALVGDGPTVAARINEYAALGIDSFVLSGYPHLEEAYRVGELLFPHLDVAIPEIPQPQPLNPQGEAVANDFIPRKVAQS.

Belongs to the SsuD family. In terms of assembly, homotetramer.

It carries out the reaction an alkanesulfonate + FMNH2 + O2 = an aldehyde + FMN + sulfite + H2O + 2 H(+). Catalyzes the desulfonation of aliphatic sulfonates. The sequence is that of Alkanesulfonate monooxygenase from Shigella flexneri serotype 5b (strain 8401).